We begin with the raw amino-acid sequence, 1296 residues long: Phosphoribosylformylglycinamidine synthase (1296 aa).

A disordered region spans residues 300 to 325 (APFSGAATGSGGEIRDEGATGRGSKP). ATP contacts are provided by residues 304 to 315 (GAATGSGGEIRD) and Ala-675. The Mg(2+) site is built by Glu-715, Asn-719, and Asp-885. Ser-887 provides a ligand contact to ATP. In terms of domain architecture, Glutamine amidotransferase type-1 spans 1043–1296 (MAILREQGVN…MFRNARKNVG (254 aa)). The active-site Nucleophile is the Cys-1136. Positions 1232 to 1253 (TQYPANPNGSPEGITGITSTDG) are disordered. Catalysis depends on residues His-1261 and Glu-1263.

The protein in the N-terminal section; belongs to the FGAMS family. In terms of assembly, monomer.

It is found in the cytoplasm. It carries out the reaction N(2)-formyl-N(1)-(5-phospho-beta-D-ribosyl)glycinamide + L-glutamine + ATP + H2O = 2-formamido-N(1)-(5-O-phospho-beta-D-ribosyl)acetamidine + L-glutamate + ADP + phosphate + H(+). Its pathway is purine metabolism; IMP biosynthesis via de novo pathway; 5-amino-1-(5-phospho-D-ribosyl)imidazole from N(2)-formyl-N(1)-(5-phospho-D-ribosyl)glycinamide: step 1/2. Phosphoribosylformylglycinamidine synthase involved in the purines biosynthetic pathway. Catalyzes the ATP-dependent conversion of formylglycinamide ribonucleotide (FGAR) and glutamine to yield formylglycinamidine ribonucleotide (FGAM) and glutamate. The polypeptide is Phosphoribosylformylglycinamidine synthase (Pseudoalteromonas translucida (strain TAC 125)).